The chain runs to 433 residues: 3-phosphoshikimate 1-carboxyvinyltransferase (433 aa).

Residues lysine 22, serine 23, and arginine 27 each contribute to the 3-phosphoshikimate site. Lysine 22 serves as a coordination point for phosphoenolpyruvate. Positions 96 and 129 each coordinate phosphoenolpyruvate. 3-phosphoshikimate is bound by residues serine 175, serine 176, glutamine 177, serine 203, aspartate 318, asparagine 341, and lysine 345. A phosphoenolpyruvate-binding site is contributed by glutamine 177. The active-site Proton acceptor is the aspartate 318. The phosphoenolpyruvate site is built by arginine 349, arginine 393, and lysine 418.

Belongs to the EPSP synthase family. As to quaternary structure, monomer.

It localises to the cytoplasm. It catalyses the reaction 3-phosphoshikimate + phosphoenolpyruvate = 5-O-(1-carboxyvinyl)-3-phosphoshikimate + phosphate. It participates in metabolic intermediate biosynthesis; chorismate biosynthesis; chorismate from D-erythrose 4-phosphate and phosphoenolpyruvate: step 6/7. Its function is as follows. Catalyzes the transfer of the enolpyruvyl moiety of phosphoenolpyruvate (PEP) to the 5-hydroxyl of shikimate-3-phosphate (S3P) to produce enolpyruvyl shikimate-3-phosphate and inorganic phosphate. This Mannheimia succiniciproducens (strain KCTC 0769BP / MBEL55E) protein is 3-phosphoshikimate 1-carboxyvinyltransferase.